Here is a 68-residue protein sequence, read N- to C-terminus: Large ribosomal subunit protein bL33c (68 aa).

This sequence belongs to the bacterial ribosomal protein bL33 family.

The protein resides in the plastid. It localises to the chloroplast. This Pinus koraiensis (Korean pine) protein is Large ribosomal subunit protein bL33c.